The following is a 103-amino-acid chain: Pyrimidine/purine nucleoside phosphorylase (103 aa).

Belongs to the nucleoside phosphorylase PpnP family.

It carries out the reaction a purine D-ribonucleoside + phosphate = a purine nucleobase + alpha-D-ribose 1-phosphate. The catalysed reaction is adenosine + phosphate = alpha-D-ribose 1-phosphate + adenine. The enzyme catalyses cytidine + phosphate = cytosine + alpha-D-ribose 1-phosphate. It catalyses the reaction guanosine + phosphate = alpha-D-ribose 1-phosphate + guanine. It carries out the reaction inosine + phosphate = alpha-D-ribose 1-phosphate + hypoxanthine. The catalysed reaction is thymidine + phosphate = 2-deoxy-alpha-D-ribose 1-phosphate + thymine. The enzyme catalyses uridine + phosphate = alpha-D-ribose 1-phosphate + uracil. It catalyses the reaction xanthosine + phosphate = alpha-D-ribose 1-phosphate + xanthine. Catalyzes the phosphorolysis of diverse nucleosides, yielding D-ribose 1-phosphate and the respective free bases. Can use uridine, adenosine, guanosine, cytidine, thymidine, inosine and xanthosine as substrates. Also catalyzes the reverse reactions. This is Pyrimidine/purine nucleoside phosphorylase from Dechloromonas aromatica (strain RCB).